The sequence spans 148 residues: Probable DNA-directed RNA polymerases I, II, and III subunit RPABC3 (148 aa).

Positions 16–40 are non-specific ssDNA binding; it reads DPDGKKFDRVSRYFCDAESFKMELI.

This sequence belongs to the eukaryotic RPB8 RNA polymerase subunit family. As to quaternary structure, component of the RNA polymerase I (Pol I), RNA polymerase II (Pol II) and RNA polymerase III (Pol III) complexes consisting of at least 13, 12 and 17 subunits, respectively. Directly interacts with POLR2A.

The protein localises to the nucleus. In terms of biological role, DNA-dependent RNA polymerase catalyzes the transcription of DNA into RNA using the four ribonucleoside triphosphates as substrates. Common component of RNA polymerases I, II and III which synthesize ribosomal RNA precursors, mRNA precursors and many functional non-coding RNAs, and small RNAs, such as 5S rRNA and tRNAs, respectively. The sequence is that of Probable DNA-directed RNA polymerases I, II, and III subunit RPABC3 from Caenorhabditis briggsae.